Reading from the N-terminus, the 223-residue chain is Protein Wnt-1 (223 aa).

Cystine bridges form between Cys7-Cys24, Cys72-Cys86, and Cys74-Cys81. The O-palmitoleoyl serine; by PORCN moiety is linked to residue Ser78. Residues 110–135 are disordered; the sequence is VTMRNDGSPSDRETESSFVPYNPSHK. Residues 125–135 are compositionally biased toward polar residues; it reads SSFVPYNPSHK. 6 cysteine pairs are disulfide-bonded: Cys152–Cys183, Cys168–Cys178, Cys182–Cys222, Cys198–Cys213, Cys200–Cys210, and Cys205–Cys206. Asn169 is a glycosylation site (N-linked (GlcNAc...) asparagine).

The protein belongs to the Wnt family. Palmitoleoylation is required for efficient binding to frizzled receptors. Palmitoleoylation is necessary for proper trafficking to cell surface. Depalmitoleoylated by NOTUM, leading to inhibit Wnt signaling pathway.

Its subcellular location is the secreted. The protein localises to the extracellular space. The protein resides in the extracellular matrix. In terms of biological role, ligand for members of the frizzled family of seven transmembrane receptors. Probable developmental protein. This is Protein Wnt-1 (WNT-1) from Strongylocentrotus purpuratus (Purple sea urchin).